We begin with the raw amino-acid sequence, 2327 residues long: MLLGPGHPLSAPALALALTLALLVRSTAPASFFGENHLEVPVPSALTRVDLLLQFSTSQPEALLLLAAGQDDHLLLQLHSGCLQVRLALGQKELKLQTPADTVLSDSAPHTVVLTVSDSWAVLSVDGVLNTSAPIPRASHLKATYGLFVGSSGSLDLPYLKGISRPLRGCLHSAILNGRNLLRPLTSDVHEGCAEEFSAGDEVGLGFSGPHSLAAFPAWSTREEGTLEFTLTTRSQQAPLAFQAGDKRGNFIYVDIFEGHLRAVVEKGQGTMLLRNSVPVADGQPHEVSVHIDVHRLEISVDQYPTRTFNRGVLSYLEPRGSLLLGGLDTEASRHLQEHRLGLAPGAANISLVGCIEDFSVNGRRQGLRDAWLTRDMSAGCRPEEDEYEEEVYGPYETFSTLAPEAWPAMELPEPCIPEPGLPAVFANFTQLLTISPLVVAEGGTAWLEWRHVQPTLDLTEAELRKSQVLFSVSQSARHGDLELDILGAQTRKMFTLLDVVNRKARFVHDGSEDTSDQLMLEVSVTARAPVPSCLRRGQIYILPIQVNPVNDPPRIIFPHGSLMVILEHTQKPLGPEIFQAYDPDSACEGLTFQLLGVSSGVPVEHRDQPGEPATEFSCRELEVGDIVYVHRGGPAQDLTFRVSDGMQASAPATLKVVAVRPAIQILHNTGLHLAQGSAAAILPANLSVETNAVGQDVSVLFRVTGTLQFGELQKQGAGGVEGTEWWDTLAFHQRDVEQGRVRYLSTDPQHHTQDTVEDLILEVQVGQETLSNLSFPVTIQRATVWMLRLEPLHTQNPHQETLTPAHLEASLEEEEEEGSPQPHTFHYELVQAPRRGNLLLQGTRLSDGESFSQSDLQAGRVTYRATMRTSEAADDSFRFRVTSPPHFSPLYTFPIHIGGDPNAPVLTNVLLMVPEGGEGVLSADHLFVKSLNSASYLYEVMEQPHHGKLAWRDPKGKSTPVTSFTNEDLLHGRLVYQHDDSETIEDDIPFVATRQGEGSGDMAWEEVRGVFRVAIQPVNDHAPVQTISRVFHVARGGQRLLTTDDVAFSDADSGFSDAQLVLTRKDLLFGSIVAMEEPTRPIYRFTQEDLRKKQVLFVHSGADHGWLQLQVSDGQHQATAMLEVQASEPYLHVANSSSLVVPQGGQGTIDTAVLQLDTNLDIRSGNEVHYHVTAGPQWGQLLRDGQSVTSFSQRDLLDGAILYSHNGSLSPQDTLAFSVAAGPVHTNTFLQVTIALEGPLAPLQLVQHKKIYVFQGEAAEIRRDQLEVVQEAVLPADIMFSLRSPPNAGYLVMVSHGASAEEPPSLDPVQSFSQEAVNSGRVLYLHSRPGAWSDSFSLDVASGLGDPLEGISVELEVLPTVIPLDVQNFSVPEGGTRTLAPPLVQITGPYFPTLPGLVLQVLEPPQHGALQKEDHSQDGSLSTFSWREVEEQLIRYVHDGSETQTDAFVLLANASEMDRQSQPVAFTITILPVNDQPPVLTTNTGLQIWEGAIVPIPPEALRGTDNDSGPEDLVYTIEQPSNGRIALRVAPDTEVHRFTQAQLDSGLVLFSHRGALEGGFHFDLSDGAHTSPGHFFRVVAQKQALLSLEGTRKLTVCPESVQPLSSQSLSASSSTGADPRHLLYRVVRGPQLGRLLHAQQGSAEEVLVNFTQAEVNAGNILYEHEMSSEPFWEAHDTIGLLLSSPPARDLAATLAVMVSFDAACPQRPSRLWKNKGLWVPEGQRAKITVAALDAANLLASVPASQRSRHDVLFQVTQFPTRGQLLVSEEPLHARRPYFLQSELAAGQLVYAHGGGGTQQDGFRFRAHLQGPTGTSVAGPQTSEAFVITVRDVNERPPQPQASIPLRVTRGSRAPVSRAQLSVVDPDSAPGEIEYEVQRAPHNGFLSLAGDNTGPVTHFTQADVDAGRLAFVANGSSVAGVFQLSMSDGASPPIPMSLAVDVLPSTIEVQLRAPLEVPQALGRTSLSRQQLQVISDREEPDVAYRLTQGPLYGQLLVGGQPASAFSQLQVDQGDVVFVFTNFSSSQDHFKVVALARGVNASATVNVTVQALLHVWAGGPWPQGTTLRLDPTVLDASELANRTGSMPHFRLLAGPRYGRVVRVSQGRTESRSNQLVEHFTQRDLEEGQLGLEVGKPEGRSTGPAGDRLTLELWAKGVPPAVALLDFATEPYHAAKSYSVALLSVPEAVRTETEKPGRSVPTGQPGQAASSPVPTAAKGGFLGFLEANMFSIIIPVCLILLLLALILPLLFYLRKRNKTGKHDVQVLTAKPRNGLAGDTETFRKVEPGQAIPLITVPGQGPPPGGQPDPELLQFCRTPNPALRNGQYWV.

The signal sequence occupies residues 1–29 (MLLGPGHPLSAPALALALTLALLVRSTAP). Laminin G-like domains are found at residues 30-193 (ASFF…HEGC) and 203-381 (VGLG…SAGC). The tract at residues 30 to 640 (ASFFGENHLE…HRGGPAQDLT (611 aa)) is globular or compact configuration stabilized by disulfide bonds. Residues 30-640 (ASFFGENHLE…HRGGPAQDLT (611 aa)) are neurite growth inhibition. The Extracellular segment spans residues 30–2229 (ASFFGENHLE…LGFLEANMFS (2200 aa)). N130 carries N-linked (GlcNAc...) asparagine glycosylation. The cysteines at positions 170 and 193 are disulfide-linked. N-linked (GlcNAc...) asparagine glycosylation occurs at N349. Cysteines 355 and 381 form a disulfide. N-linked (GlcNAc...) asparagine glycosylation occurs at N428. CSPG repeat units follow at residues 429–524 (FTQL…LEVS), 554–646 (PRII…VSDG), and 663–765 (AIQI…LEVQ). The interaction with COL6A2 stretch occupies residues 575–1045 (GPEIFQAYDP…RGGQRLLTTD (471 aa)). The segment at 632–1451 (RGGPAQDLTF…SETQTDAFVL (820 aa)) is interaction with COL5A1. N686 and N773 each carry an N-linked (GlcNAc...) asparagine glycan. CSPG repeat units lie at residues 784-883 (TVWM…FRVT) and 903-994 (NAPV…FVAT). An O-linked (Xyl...) (chondroitin sulfate) serine glycan is attached at S1000. 9 CSPG repeats span residues 1023 to 1115 (APVQ…VSDG), 1131 to 1221 (YLHV…FSVA), 1243 to 1342 (PLQL…LDVA), 1361 to 1454 (TVIP…LLAN), 1478 to 1568 (PPVL…LSDG), 1586 to 1684 (LLSL…LLLS), 1709 to 1808 (PSRL…FRAH), 1837 to 1929 (PPQP…MSDG), and 1946 to 2034 (TIEV…VVAL). Residues N1136 and N1207 are each glycosylated (N-linked (GlcNAc...) asparagine). Residues N1369 and N1454 are each glycosylated (N-linked (GlcNAc...) asparagine). The tract at residues 1591–2226 (GTRKLTVCPE…GGFLGFLEAN (636 aa)) is neurite growth inhibition. Residues 1592 to 2226 (TRKLTVCPES…GGFLGFLEAN (635 aa)) are cysteine-containing. N1650 carries an N-linked (GlcNAc...) asparagine glycan. Residues N1914, N2021, N2039, N2045, and N2080 are each glycosylated (N-linked (GlcNAc...) asparagine). One copy of the CSPG 15 repeat lies at 2043-2152 (TVNVTVQALL…AGDRLTLELW (110 aa)). The disordered stretch occupies residues 2190 to 2210 (ETEKPGRSVPTGQPGQAASSP). Residues 2199-2210 (PTGQPGQAASSP) show a composition bias toward polar residues. The helical transmembrane segment at 2230 to 2250 (IIIPVCLILLLLALILPLLFY) threads the bilayer. The Cytoplasmic segment spans residues 2251 to 2327 (LRKRNKTGKH…PALRNGQYWV (77 aa)). T2257 is modified (phosphothreonine; by PKC/PRKCA). A PDZ-binding motif is present at residues 2325–2327 (YWV).

In terms of assembly, interacts with ITGA4 through its chondroitin sulfate glycosaminoglycan. Interacts with BCAR1, CDC42 and ACK1. Interacts with MMP16. Interacts with the first PDZ domain of MPDZ. Interacts with PRKCA. Interacts with LGALS3 and the integrin composed of ITGB1 and ITGA3. Binds TNC, laminin-1, COL5A1 and COL6A2. Interacts with PLG and angiostatin. Binds FGF2 and PDGFA. Interacts with GRIP1, GRIP2 and GRIA2. Forms a ternary complex with GRIP1 and GRIA2. In terms of processing, O-glycosylated; contains glycosaminoglycan chondroitin sulfate which are required for proper localization and function in stress fiber formation. Involved in interaction with MMP16 and ITGA4. Post-translationally, phosphorylation by PRKCA regulates its subcellular location and function in cell motility. Expressed in microcascular pericytes and not endothelial cells.

The protein resides in the cell membrane. The protein localises to the apical cell membrane. It localises to the cell projection. It is found in the lamellipodium membrane. Its subcellular location is the cell surface. Its function is as follows. Proteoglycan playing a role in cell proliferation and migration which stimulates endothelial cells motility during microvascular morphogenesis. May also inhibit neurite outgrowth and growth cone collapse during axon regeneration. Cell surface receptor for collagen alpha 2(VI) which may confer cells ability to migrate on that substrate. Binds through its extracellular N-terminus growth factors, extracellular matrix proteases modulating their activity. May regulate MPP16-dependent degradation and invasion of type I collagen participating in melanoma cells invasion properties. May modulate the plasminogen system by enhancing plasminogen activation and inhibiting angiostatin. Also functions as a signal transducing protein by binding through its cytoplasmic C-terminus scaffolding and signaling proteins. May promote retraction fiber formation and cell polarization through Rho GTPase activation. May stimulate alpha-4, beta-1 integrin-mediated adhesion and spreading by recruiting and activating a signaling cascade through CDC42, ACK1 and BCAR1. May activate FAK and ERK1/ERK2 signaling cascades. The chain is Chondroitin sulfate proteoglycan 4 (Cspg4) from Mus musculus (Mouse).